An 876-amino-acid polypeptide reads, in one-letter code: Dynein regulatory complex subunit 7 (876 aa).

2 coiled-coil regions span residues 1–33 (MEVL…ERVT) and 258–295 (KFEQ…AKPD). Residues 1–40 (MEVLREKVEEEEEAEREEAAERAERTEKLERVTKSAEVSR) form a disordered region. Residues 17 to 40 (EEAAERAERTEKLERVTKSAEVSR) are compositionally biased toward basic and acidic residues. A disordered region spans residues 385–412 (SLTEEDEEGLDDDDDDVEDLGKEEEDKS). Positions 387-407 (TEEDEEGLDDDDDDVEDLGKE) are enriched in acidic residues. 2 coiled-coil regions span residues 679–710 (QLKN…EEEE) and 784–809 (QRLI…KKQQ).

This sequence belongs to the DRC7 family. In terms of assembly, component of the nexin-dynein regulatory complex (N-DRC). Interacts with TCTE1/DRC5. Interacts with DRC3 and GAS8/DRC4. In terms of tissue distribution, expressed in diplotene and pachytene spermytocytes, and in round and elongating spermatids (at protein level). Strongly expressed in spleen and testis, faintly expressed in kidney, ovary and thymus. As to expression, abundantly expressed in the testis and is weakly expressed in the brain, thymus, lung and ovary. Expressed in ciliated cells.

It localises to the cell projection. Its subcellular location is the cilium. The protein resides in the flagellum. It is found in the cytoplasm. The protein localises to the cytoskeleton. It localises to the cilium axoneme. Its subcellular location is the flagellum axoneme. Functionally, component of the nexin-dynein regulatory complex (N-DRC) a key regulator of ciliary/flagellar motility which maintains the alignment and integrity of the distal axoneme and regulates microtubule sliding in motile axonemes. Essential for male fertility, sperm head morphogenesis and sperm flagellum formation. Not required for ciliogenesis in the brain and trachea. This chain is Dynein regulatory complex subunit 7 (Drc7), found in Mus musculus (Mouse).